Consider the following 421-residue polypeptide: MEF2-activating motif and SAP domain-containing transcriptional regulator (421 aa).

Residues 12–28 (IIRSKFRSVLQLRIHRR) carry the MEF2-binding motif. Disordered stretches follow at residues 104-156 (PPEQ…PPSH), 188-296 (KAML…ASLT), and 322-406 (DQVE…ADLS). Positions 165–199 (LEELTVSELRQQLRLRGLPVSGTKAMLLERMRGGT) constitute an SAP domain. The segment covering 191 to 214 (LLERMRGGTPPRERPKPRREDKEA) has biased composition (basic and acidic residues). A transcription activation region spans residues 208-421 (RREDKEAAAP…LLWELLPDPW (214 aa)). The segment covering 230-241 (RLPSTVKASATN) has biased composition (polar residues). Residues 260-292 (ASVPAPTPSPALAPTPTPAPVPAPAPAPFPTPP) are compositionally biased toward pro residues. The span at 347 to 372 (SPDSEGFSSVFSSSLPSPTSSLSPSP) shows a compositional bias: low complexity.

In terms of assembly, interacts with MEF2C. In terms of tissue distribution, expressed in skeletal muscle, brain, placenta and spleen.

Its subcellular location is the nucleus. In terms of biological role, transcriptional coactivator. Stimulates the transcriptional activity of MEF2C. Stimulates MYOD1 activity in part via MEF2, resulting in an enhancement of skeletal muscle differentiation. This is MEF2-activating motif and SAP domain-containing transcriptional regulator (Mamstr) from Mus musculus (Mouse).